The primary structure comprises 296 residues: Ribose import binding protein RbsB (296 aa).

An N-terminal signal peptide occupies residues 1 to 25; the sequence is MNMKKLATLVSAVALSATVSANAMA.

Belongs to the bacterial solute-binding protein 2 family. In terms of assembly, the complex is composed of an ATP-binding protein (RbsA), two transmembrane proteins (RbsC) and a solute-binding protein (RbsB).

The protein resides in the periplasm. Functionally, part of the ABC transporter complex RbsABC involved in ribose import. Binds ribose. Also serves as the primary chemoreceptor for chemotaxis. This is Ribose import binding protein RbsB from Escherichia coli (strain K12).